The sequence spans 329 residues: Neuropeptides B/W receptor type 1 (329 aa).

Residues 1 to 39 lie on the Extracellular side of the membrane; it reads MHNLSLFEPGRGNVSCGGPFLGCPNESNPAPLPLPQPLA. N-linked (GlcNAc...) asparagine glycans are attached at residues Asn3, Asn13, and Asn25. Residues 40–63 traverse the membrane as a helical segment; that stretch reads VAVPVVYGVICAVGLAGNSAVLYV. The Cytoplasmic segment spans residues 64–74; the sequence is LLRTPRMKTVT. The chain crosses the membrane as a helical span at residues 75–99; that stretch reads NVFILNLAIADELFTLVLPINIADF. Topologically, residues 100 to 114 are extracellular; it reads LLRRWPFGEVMCKLI. Cysteines 111 and 190 form a disulfide. A helical transmembrane segment spans residues 115–134; sequence VAVDQYNTFSSLYFLAVMSA. Over 135–159 the chain is Cytoplasmic; that stretch reads DRYLVVLATAESRRVSGRTYGAARA. Residues 160–179 form a helical membrane-spanning segment; that stretch reads VSLAVWALVTLVVLPFAVFA. The Extracellular segment spans residues 180–204; it reads RLDEEQGRRQCVLVFPQPEAFWWRA. A helical transmembrane segment spans residues 205-226; the sequence is SRLYTLVLGFAIPVSTICALYI. The Cytoplasmic segment spans residues 227 to 250; it reads TLLCRLRAIQLDSHAKALDRAKKR. A helical transmembrane segment spans residues 251-275; sequence VTLLVVAILAVCLLCWTPYHLSTIV. The Extracellular portion of the chain corresponds to 276–285; the sequence is ALTTDLPQTP. The chain crosses the membrane as a helical span at residues 286–300; it reads LVIGISYFITSLSYA. Over 301–329 the chain is Cytoplasmic; sequence NSCLNPFLYAFLDDSFRRSLRQLVSCRTA.

This sequence belongs to the G-protein coupled receptor 1 family.

The protein localises to the cell membrane. Functionally, interacts specifically with a number of opioid ligands. Receptor for neuropeptides B and W, which may be involved in neuroendocrine system regulation, food intake and the organization of other signals. This Rattus norvegicus (Rat) protein is Neuropeptides B/W receptor type 1 (Npbwr1).